The primary structure comprises 778 residues: Ral guanine nucleotide dissociation stimulator-like 2 (778 aa).

Over residues 1 to 15 (MLPRPLRLLLDTTPP) the composition is skewed to low complexity. Residues 1–59 (MLPRPLRLLLDTTPPGGVVLSSFRSRDPEEGGDPGGRAVGGGQEEEDEEEEEASVSVWD) are disordered. A compositionally biased stretch (gly residues) spans 33-42 (DPGGRAVGGG). Residues 43–59 (QEEEDEEEEEASVSVWD) are compositionally biased toward acidic residues. An N-terminal Ras-GEF domain is found at 88-212 (SSRRLRAGTL…GSADLIRNLR (125 aa)). In terms of domain architecture, Ras-GEF spans 243–513 (LADHLAEQLT…HRVSCEVEPP (271 aa)). Disordered regions lie at residues 503–524 (SHRV…ARTP), 541–564 (GGPT…GTPA), 581–647 (SLDS…GPGS), and 735–769 (RRPS…IKAT). Residues 581–592 (SLDSALESSPSL) are compositionally biased toward low complexity. The segment covering 620 to 632 (CGSPLSGNTGEGT) has biased composition (polar residues). Residues 649-736 (DCRIIRVQME…HDFLLRQRRR (88 aa)) form the Ras-associating domain. Low complexity predominate over residues 738-756 (SAATPGSHSGPSASGTPPS).

Interacts with SAMD9.

Probable guanine nucleotide exchange factor. Putative effector of Ras and/or Rap. Associates with the GTP-bound form of Rap 1A and H-Ras in vitro. The polypeptide is Ral guanine nucleotide dissociation stimulator-like 2 (Rgl2) (Mus musculus (Mouse)).